A 119-amino-acid polypeptide reads, in one-letter code: Large ribosomal subunit protein bL20 (119 aa).

The protein belongs to the bacterial ribosomal protein bL20 family.

Binds directly to 23S ribosomal RNA and is necessary for the in vitro assembly process of the 50S ribosomal subunit. It is not involved in the protein synthesizing functions of that subunit. This chain is Large ribosomal subunit protein bL20, found in Xanthomonas campestris pv. campestris (strain 8004).